Here is a 468-residue protein sequence, read N- to C-terminus: MDGKSNYSRLLIALLMILFFGGIVLQYICSTSDWQLLHLASLSSRLGSRAPGDRLNGAGAGDPYSSEDGALVRFVPRFNFTTKDLSRAVDFHIKGDDVIVFLHIQKTGGTTFGRHLVRNIQLERPCECHAGQKKCTCYRPGKRDTWLFSRFSTGWSCGLHADWTELTNCVPSFMSNRESQERRMTPSRNYYYITILRDPVWRYLSEWRHVQRGATWKASKHMCDGRLPTLTELPSCYPGDDWSGCSLEEFMVCPYNLANNRQTRMLADLSLVGCYNLTVMSENQRWAMLLESAKRNLRNMAFFGLTEYQRKTQYLFEHTFRLSFIAPFTQLNGTRAASVEVEPETQRRIRELNQWDVELYEYARDLFLQRFQFARQQERREARQRRIQERRKLRAKVKSWLGVTGKAVFKPTKEPPMTEQSPAFAEEKQADAERTLESETEGQVEENWLEEDDGEIMLDYLENVEQWR.

Residues 1–9 are Cytoplasmic-facing; that stretch reads MDGKSNYSR. The chain crosses the membrane as a helical; Signal-anchor for type II membrane protein span at residues 10–30; the sequence is LLIALLMILFFGGIVLQYICS. Residues 31–468 are Lumenal-facing; it reads TSDWQLLHLA…DYLENVEQWR (438 aa). N-linked (GlcNAc...) asparagine glycosylation is present at N79. 103 to 111 contacts 3'-phosphoadenylyl sulfate; that stretch reads HIQKTGGTT. Residues 133–134, R150, W155, and H160 each bind substrate; that span reads KK. H160 acts as the Proton acceptor in catalysis. The 3'-phosphoadenylyl sulfate site is built by R197 and S205. Residues H209 and W216 each coordinate substrate. N-linked (GlcNAc...) asparagine glycosylation is present at N276. 329–331 is a 3'-phosphoadenylyl sulfate binding site; it reads TQL. N-linked (GlcNAc...) asparagine glycosylation occurs at N332. Position 335-336 (335-336) interacts with 3'-phosphoadenylyl sulfate; the sequence is RA. Residues 409–447 form a disordered region; it reads FKPTKEPPMTEQSPAFAEEKQADAERTLESETEGQVEEN. The span at 425-437 shows a compositional bias: basic and acidic residues; the sequence is AEEKQADAERTLE. The span at 438–447 shows a compositional bias: acidic residues; the sequence is SETEGQVEEN.

It belongs to the sulfotransferase 6 family. Expressed ubiquitously during gastrulation. During early somitogenesis, strong expression in head and presumptive brain. During mid-somitogenesis, strong expression in eye, hindbrain and somitic boundaries and weak expression in tail bud. During late somitogenesis, strong expression in eye, hindbrain, branchial arch primordia, spinal cord and ventral medial somites. At 24 hours post-fertilization (hpf), strong expression throughout the head, with expression receeding from the trunk spinal cord, ventral medial somites and somitic boundaries; expressed in cells surrounding vascular structures of the dorsal aorta and caudal vein in the tail. At 36 hpf, expressed in lens, optic stalk, hindbrain and pectoral fin. At 48 hpf, expressed in eye, brain, otic vesicle and branchial arches.

It is found in the membrane. It catalyses the reaction alpha-D-glucosaminyl-[heparan sulfate](n) + 3'-phosphoadenylyl sulfate = 6-sulfo-alpha-D-glucosaminyl-[heparan sulfate](n) + adenosine 3',5'-bisphosphate + H(+). Its function is as follows. 6-O-sulfation enzyme which catalyzes the transfer of sulfate from 3'-phosphoadenosine 5'-phosphosulfate (PAPS) to position 6 of the N-sulfoglucosamine residue (GlcNS) of heparan sulfate. Required for muscle development and angiogenesis. The chain is Heparan-sulfate 6-O-sulfotransferase 2 (hs6st2) from Danio rerio (Zebrafish).